Consider the following 67-residue polypeptide: Beta-defensin 103A (67 aa).

An N-terminal signal peptide occupies residues 1–22 (MRIHYLLFALLFLFLVPVPGHG). Intrachain disulfides connect cysteine 33–cysteine 62, cysteine 40–cysteine 55, and cysteine 45–cysteine 63.

Belongs to the beta-defensin family.

The protein resides in the secreted. Its function is as follows. Exhibits antimicrobial activity against Gram-positive and Gram-negative bacteria. The sequence is that of Beta-defensin 103A (DEFB103A) from Pan troglodytes (Chimpanzee).